The following is a 320-amino-acid chain: Histidine decarboxylase proenzyme (320 aa).

Residues 2–11 constitute a propeptide that is removed on maturation; sequence NKNLEANRNR. The residue at position 98 (S98) is a Pyruvic acid (Ser). The active-site Proton donor is the E215.

The proenzyme is a hexamer of identical pi chains; each pi chain monomer is cleaved to form a small (or beta) chain and a large (or alpha) chain by non-hydrolytic self-catalysis. Requires pyruvate as cofactor.

It catalyses the reaction L-histidine + H(+) = histamine + CO2. This is Histidine decarboxylase proenzyme (hdc) from Clostridium perfringens (strain ATCC 13124 / DSM 756 / JCM 1290 / NCIMB 6125 / NCTC 8237 / Type A).